A 1395-amino-acid polypeptide reads, in one-letter code: DNA-directed RNA polymerase subunit beta' (1395 aa).

Cysteine 70, cysteine 72, cysteine 85, and cysteine 88 together coordinate Zn(2+). Mg(2+)-binding residues include aspartate 470, aspartate 472, and aspartate 474. Positions 815, 889, 896, and 899 each coordinate Zn(2+).

The protein belongs to the RNA polymerase beta' chain family. In terms of assembly, the RNAP catalytic core consists of 2 alpha, 1 beta, 1 beta' and 1 omega subunit. When a sigma factor is associated with the core the holoenzyme is formed, which can initiate transcription. Mg(2+) is required as a cofactor. Zn(2+) serves as cofactor.

The enzyme catalyses RNA(n) + a ribonucleoside 5'-triphosphate = RNA(n+1) + diphosphate. Its function is as follows. DNA-dependent RNA polymerase catalyzes the transcription of DNA into RNA using the four ribonucleoside triphosphates as substrates. This Anaeromyxobacter sp. (strain Fw109-5) protein is DNA-directed RNA polymerase subunit beta'.